Consider the following 762-residue polypeptide: uncharacterized protein (762 aa).

Residues 1 to 26 (MENLKSASPEEDSPRHGDNMGKPKRI) are disordered. Over residues 12–21 (DSPRHGDNMG) the composition is skewed to basic and acidic residues. A DNA-binding region (zn(2)-C6 fungal-type) is located at residues 30-57 (CDMCRKRKIRCDGKQPACSNCVSHGIPC). The interval 647–668 (QSHVPPRISSNHSDTSVKSNSP) is disordered.

It is found in the nucleus. This is an uncharacterized protein from Schizosaccharomyces pombe (strain 972 / ATCC 24843) (Fission yeast).